Consider the following 178-residue polypeptide: Probable coatomer subunit zeta-B (178 aa).

It belongs to the adaptor complexes small subunit family. Oligomeric complex that consists of at least the alpha, beta, beta', gamma, delta, epsilon and zeta subunits.

Its subcellular location is the cytoplasm. It localises to the golgi apparatus membrane. It is found in the cytoplasmic vesicle. The protein localises to the COPI-coated vesicle membrane. The coatomer is a cytosolic protein complex that binds to dilysine motifs and reversibly associates with Golgi non-clathrin-coated vesicles, which further mediate biosynthetic protein transport from the ER, via the Golgi up to the trans Golgi network. Coatomer complex is required for budding from Golgi membranes, and is essential for the retrograde Golgi-to-ER transport of dilysine-tagged proteins. The zeta subunit may be involved in regulating the coat assembly and, hence, the rate of biosynthetic protein transport due to its association-dissociation properties with the coatomer complex. This chain is Probable coatomer subunit zeta-B (copZb), found in Dictyostelium discoideum (Social amoeba).